Here is an 81-residue protein sequence, read N- to C-terminus: Photosystem I iron-sulfur center (81 aa).

2 4Fe-4S ferredoxin-type domains span residues 1-31 (MSHKVKIYDTCIGCTQCVRACPLDVLEMVPW) and 39-68 (IASSPRTEDCVGCKRCETACPTDFLSIRVY). Residues Cys11, Cys14, Cys17, Cys21, Cys48, Cys51, Cys54, and Cys58 each contribute to the [4Fe-4S] cluster site.

As to quaternary structure, the cyanobacterial PSI reaction center is composed of one copy each of PsaA,B,C,D,E,F,I,J,K,L,M and X, and forms trimeric complexes. The cofactor is [4Fe-4S] cluster.

It localises to the cellular thylakoid membrane. The catalysed reaction is reduced [plastocyanin] + hnu + oxidized [2Fe-2S]-[ferredoxin] = oxidized [plastocyanin] + reduced [2Fe-2S]-[ferredoxin]. Apoprotein for the two 4Fe-4S centers FA and FB of photosystem I (PSI); essential for photochemical activity. FB is the terminal electron acceptor of PSI, donating electrons to ferredoxin. The C-terminus interacts with PsaA/B/D and helps assemble the protein into the PSI complex. Required for binding of PsaD and PsaE to PSI. PSI is a plastocyanin/cytochrome c6-ferredoxin oxidoreductase, converting photonic excitation into a charge separation, which transfers an electron from the donor P700 chlorophyll pair to the spectroscopically characterized acceptors A0, A1, FX, FA and FB in turn. The protein is Photosystem I iron-sulfur center of Crocosphaera subtropica (strain ATCC 51142 / BH68) (Cyanothece sp. (strain ATCC 51142)).